A 251-amino-acid chain; its full sequence is 1-(5-phosphoribosyl)-5-[(5-phosphoribosylamino)methylideneamino] imidazole-4-carboxamide isomerase (251 aa).

Asp-8 acts as the Proton acceptor in catalysis. Asp-131 functions as the Proton donor in the catalytic mechanism.

Belongs to the HisA/HisF family.

It localises to the cytoplasm. The enzyme catalyses 1-(5-phospho-beta-D-ribosyl)-5-[(5-phospho-beta-D-ribosylamino)methylideneamino]imidazole-4-carboxamide = 5-[(5-phospho-1-deoxy-D-ribulos-1-ylimino)methylamino]-1-(5-phospho-beta-D-ribosyl)imidazole-4-carboxamide. The protein operates within amino-acid biosynthesis; L-histidine biosynthesis; L-histidine from 5-phospho-alpha-D-ribose 1-diphosphate: step 4/9. The chain is 1-(5-phosphoribosyl)-5-[(5-phosphoribosylamino)methylideneamino] imidazole-4-carboxamide isomerase from Burkholderia ambifaria (strain MC40-6).